The chain runs to 473 residues: Photosystem II CP43 reaction center protein (473 aa).

Residues 1-14 constitute a propeptide that is removed on maturation; sequence MKTLYSLRRFYPVE. Position 15 is an N-acetylthreonine (T15). Residue T15 is modified to Phosphothreonine. 5 helical membrane-spanning segments follow: residues 69 to 93, 134 to 155, 178 to 200, 255 to 275, and 291 to 312; these read LFEVAHFVPEKPMYEQGLILLPHLA, LLGPETLEESFPFFGYVWKDRN, KALYFGGVYDTWAPGGGDVRKIT, KPFAWARRALVWSGEAYLSYS, and WFNNTAYPSEFYGPTGPEASQA. [CaMn4O5] cluster is bound at residue E367. Residues 447–471 traverse the membrane as a helical segment; it reads RARAAAAGFEKGIDRDFEPVLSMTP.

Belongs to the PsbB/PsbC family. PsbC subfamily. As to quaternary structure, PSII is composed of 1 copy each of membrane proteins PsbA, PsbB, PsbC, PsbD, PsbE, PsbF, PsbH, PsbI, PsbJ, PsbK, PsbL, PsbM, PsbT, PsbX, PsbY, PsbZ, Psb30/Ycf12, at least 3 peripheral proteins of the oxygen-evolving complex and a large number of cofactors. It forms dimeric complexes. Binds multiple chlorophylls and provides some of the ligands for the Ca-4Mn-5O cluster of the oxygen-evolving complex. It may also provide a ligand for a Cl- that is required for oxygen evolution. PSII binds additional chlorophylls, carotenoids and specific lipids. is required as a cofactor.

Its subcellular location is the plastid. The protein localises to the chloroplast thylakoid membrane. Functionally, one of the components of the core complex of photosystem II (PSII). It binds chlorophyll and helps catalyze the primary light-induced photochemical processes of PSII. PSII is a light-driven water:plastoquinone oxidoreductase, using light energy to abstract electrons from H(2)O, generating O(2) and a proton gradient subsequently used for ATP formation. This is Photosystem II CP43 reaction center protein from Vitis vinifera (Grape).